Here is a 184-residue protein sequence, read N- to C-terminus: ATP synthase subunit b, chloroplastic (184 aa).

A helical transmembrane segment spans residues 27-49 (LATNPINLSVVLGVLIFFGKGVL).

This sequence belongs to the ATPase B chain family. As to quaternary structure, F-type ATPases have 2 components, F(1) - the catalytic core - and F(0) - the membrane proton channel. F(1) has five subunits: alpha(3), beta(3), gamma(1), delta(1), epsilon(1). F(0) has four main subunits: a(1), b(1), b'(1) and c(10-14). The alpha and beta chains form an alternating ring which encloses part of the gamma chain. F(1) is attached to F(0) by a central stalk formed by the gamma and epsilon chains, while a peripheral stalk is formed by the delta, b and b' chains.

It localises to the plastid. It is found in the chloroplast thylakoid membrane. Functionally, f(1)F(0) ATP synthase produces ATP from ADP in the presence of a proton or sodium gradient. F-type ATPases consist of two structural domains, F(1) containing the extramembraneous catalytic core and F(0) containing the membrane proton channel, linked together by a central stalk and a peripheral stalk. During catalysis, ATP synthesis in the catalytic domain of F(1) is coupled via a rotary mechanism of the central stalk subunits to proton translocation. Component of the F(0) channel, it forms part of the peripheral stalk, linking F(1) to F(0). This is ATP synthase subunit b, chloroplastic from Atropa belladonna (Belladonna).